Reading from the N-terminus, the 185-residue chain is Pre-mRNA-splicing factor SPP2 (185 aa).

The 50-residue stretch at Val100 to Gly149 folds into the G-patch domain. The segment at Gly112–Pro143 is disordered. Basic and acidic residues predominate over residues Gln121 to Asp134.

This sequence belongs to the SPP2 family. In terms of assembly, belongs to the CWC complex (or CEF1-associated complex), a spliceosome sub-complex reminiscent of a late-stage spliceosome composed of the U2, U5 and U6 snRNAs and at least BUD13, BUD31, BRR2, CDC40, CEF1, CLF1, CUS1, CWC2, CWC15, CWC21, CWC22, CWC23, CWC24, CWC25, CWC27, ECM2, HSH155, IST3, ISY1, LEA1, MSL1, NTC20, PRP8, PRP9, PRP11, PRP19, PRP21, PRP22, PRP45, PRP46, SLU7, SMB1, SMD1, SMD2, SMD3, SMX2, SMX3, SNT309, SNU114, SPP2, SYF1, SYF2, RSE1 and YJU2. Interacts with PRP2.

It is found in the cytoplasm. Its subcellular location is the nucleus. In terms of biological role, involved in pre-mRNA splicing; specifically in the final stages of spliceosome maturation. Promotes the first step of splicing. This chain is Pre-mRNA-splicing factor SPP2 (SPP2), found in Saccharomyces cerevisiae (strain ATCC 204508 / S288c) (Baker's yeast).